A 173-amino-acid chain; its full sequence is Translation initiation factor IF-3 (173 aa).

The protein belongs to the IF-3 family. In terms of assembly, monomer.

The protein localises to the cytoplasm. IF-3 binds to the 30S ribosomal subunit and shifts the equilibrium between 70S ribosomes and their 50S and 30S subunits in favor of the free subunits, thus enhancing the availability of 30S subunits on which protein synthesis initiation begins. In Caulobacter sp. (strain K31), this protein is Translation initiation factor IF-3.